The chain runs to 180 residues: Nucleoside triphosphate/diphosphate phosphatase (180 aa).

Arg26 (proton donor) is an active-site residue. 6 residues coordinate Mg(2+): Asn90, Asp106, Asp108, Asp110, Asp123, and Glu126.

Belongs to the Ntdp family. Mg(2+) serves as cofactor.

The catalysed reaction is a ribonucleoside 5'-triphosphate + H2O = a ribonucleoside 5'-diphosphate + phosphate + H(+). The enzyme catalyses a ribonucleoside 5'-diphosphate + H2O = a ribonucleoside 5'-phosphate + phosphate + H(+). Has nucleoside phosphatase activity towards nucleoside triphosphates and nucleoside diphosphates. In Staphylococcus aureus (strain MSSA476), this protein is Nucleoside triphosphate/diphosphate phosphatase.